The sequence spans 188 residues: ATP synthase subunit b (188 aa).

The chain crosses the membrane as a helical span at residues 19–39 (LPAVYDIVWSAVVFVVLLVVI).

It belongs to the ATPase B chain family. In terms of assembly, F-type ATPases have 2 components, F(1) - the catalytic core - and F(0) - the membrane proton channel. F(1) has five subunits: alpha(3), beta(3), gamma(1), delta(1), epsilon(1). F(0) has three main subunits: a(1), b(2) and c(10-14). The alpha and beta chains form an alternating ring which encloses part of the gamma chain. F(1) is attached to F(0) by a central stalk formed by the gamma and epsilon chains, while a peripheral stalk is formed by the delta and b chains.

Its subcellular location is the cell membrane. In terms of biological role, f(1)F(0) ATP synthase produces ATP from ADP in the presence of a proton or sodium gradient. F-type ATPases consist of two structural domains, F(1) containing the extramembraneous catalytic core and F(0) containing the membrane proton channel, linked together by a central stalk and a peripheral stalk. During catalysis, ATP synthesis in the catalytic domain of F(1) is coupled via a rotary mechanism of the central stalk subunits to proton translocation. Functionally, component of the F(0) channel, it forms part of the peripheral stalk, linking F(1) to F(0). The protein is ATP synthase subunit b of Clavibacter michiganensis subsp. michiganensis (strain NCPPB 382).